The chain runs to 391 residues: Probable tRNA sulfurtransferase (391 aa).

The THUMP domain occupies 60–167 (DETVAALQRV…NKAYVYSNTL (108 aa)). Residues 184 to 185 (LL), 209 to 210 (YF), Arg-266, Gly-288, and Gln-297 contribute to the ATP site.

It belongs to the ThiI family.

It is found in the cytoplasm. It catalyses the reaction [ThiI sulfur-carrier protein]-S-sulfanyl-L-cysteine + a uridine in tRNA + 2 reduced [2Fe-2S]-[ferredoxin] + ATP + H(+) = [ThiI sulfur-carrier protein]-L-cysteine + a 4-thiouridine in tRNA + 2 oxidized [2Fe-2S]-[ferredoxin] + AMP + diphosphate. It carries out the reaction [ThiS sulfur-carrier protein]-C-terminal Gly-Gly-AMP + S-sulfanyl-L-cysteinyl-[cysteine desulfurase] + AH2 = [ThiS sulfur-carrier protein]-C-terminal-Gly-aminoethanethioate + L-cysteinyl-[cysteine desulfurase] + A + AMP + 2 H(+). It participates in cofactor biosynthesis; thiamine diphosphate biosynthesis. Functionally, catalyzes the ATP-dependent transfer of a sulfur to tRNA to produce 4-thiouridine in position 8 of tRNAs, which functions as a near-UV photosensor. Also catalyzes the transfer of sulfur to the sulfur carrier protein ThiS, forming ThiS-thiocarboxylate. This is a step in the synthesis of thiazole, in the thiamine biosynthesis pathway. The sulfur is donated as persulfide by IscS. In Lachnoclostridium phytofermentans (strain ATCC 700394 / DSM 18823 / ISDg) (Clostridium phytofermentans), this protein is Probable tRNA sulfurtransferase.